The sequence spans 128 residues: Small ribosomal subunit protein uS14m (128 aa).

The protein belongs to the universal ribosomal protein uS14 family. Component of the mitochondrial ribosome small subunit (28S) which comprises a 12S rRNA and about 30 distinct proteins. Interacts with LIAT1.

The protein resides in the mitochondrion. This Bos taurus (Bovine) protein is Small ribosomal subunit protein uS14m (MRPS14).